The chain runs to 46 residues: Bottromycin D (46 aa).

The propeptide occupies 10–46; sequence MTADFLNDDPNNAELSSLEMEELESWGAWSDDTDQSV.

Post-translationally, the precursor peptide is first ribosomally synthesized and then highly tailored by specific enzymes to yield the final natural product. These modifications include several methylations, cyclization and the formation of t-Leu and Thia-beta-Ala residues.

It is found in the secreted. Functionally, bottromycin D is a ribosomally synthesized and post-translationally modified peptide (RiPP) that displays antibiotic activity against methicillin-resistant S.aureus (MRSA). This Streptomyces sp protein is Bottromycin D.